A 298-amino-acid polypeptide reads, in one-letter code: N-acetylmuramic acid 6-phosphate etherase (298 aa).

The SIS domain occupies Ile55–Lys218. Glu83 acts as the Proton donor in catalysis. Glu114 is an active-site residue.

It belongs to the GCKR-like family. MurNAc-6-P etherase subfamily. In terms of assembly, homodimer.

The catalysed reaction is N-acetyl-D-muramate 6-phosphate + H2O = N-acetyl-D-glucosamine 6-phosphate + (R)-lactate. The protein operates within amino-sugar metabolism; 1,6-anhydro-N-acetylmuramate degradation. It participates in amino-sugar metabolism; N-acetylmuramate degradation. Its pathway is cell wall biogenesis; peptidoglycan recycling. In terms of biological role, specifically catalyzes the cleavage of the D-lactyl ether substituent of MurNAc 6-phosphate, producing GlcNAc 6-phosphate and D-lactate. Together with AnmK, is also required for the utilization of anhydro-N-acetylmuramic acid (anhMurNAc) either imported from the medium or derived from its own cell wall murein, and thus plays a role in cell wall recycling. This is N-acetylmuramic acid 6-phosphate etherase from Shigella sonnei (strain Ss046).